A 74-amino-acid polypeptide reads, in one-letter code: ERTHTGEKPFKCPECQKRFTRDHHLKTHMRLHTGEKPYHCSHCDRHFVQVANLRRHLRVHTGERPYTCEICKAK.

C2H2-type zinc fingers lie at residues 1–4, 10–32, 38–60, and 66–74; these read ERTH, FKCPECQKRFTRDHHLKTHMRLH, YHCSHCDRHFVQVANLRRHLRVH, and YTCEICKAK.

This sequence belongs to the krueppel C2H2-type zinc-finger protein family.

It is found in the nucleus. Its function is as follows. Krueppel is a gap class segmentation protein. This chain is Protein krueppel (Kr), found in Bradysia coprophila (Dark-winged fungus gnat).